Reading from the N-terminus, the 692-residue chain is Ena/VASP-like protein (692 aa).

The 112-residue stretch at 1–112 (MSEQSICQAR…NAMLFALNIM (112 aa)) folds into the WH1 domain. Disordered regions lie at residues 116-310 (DGGP…VQKN), 466-518 (SAAM…YEES), and 531-650 (KLRK…NDVS). Polar residues-rich tracts occupy residues 123-132 (RQAQNIQNGP) and 159-169 (STTVSTLQINV). A compositionally biased stretch (low complexity) spans 214–226 (SSKSTNKSSNRTS). Residues 231–267 (LQNSHCGSEPSTSQSSAFSPIRPSNGTVSRSIKQISL) show a composition bias toward polar residues. Low complexity-rich tracts occupy residues 288-310 (PSLS…VQKN) and 466-479 (SAAM…APAP). Pro residues predominate over residues 480-506 (ASGPPPPPPPGPPPPSGGTPPPAPPLP). Positions 522–542 (GLAAALAGAKLRKVQRPEDGS) are EVH2 block A. Residues 522–689 (GLAAALAGAK…DAIRQELSRI (168 aa)) are EVH2. Residues 531–534 (KLRK) carry the KLKR motif. Residues 563–580 (GGLMEEMNKLLAKRRKAA) form an EVH2 block B region. Residues 597-617 (EDASLSSSPVTRGPTPQNSSD) show a composition bias toward polar residues. Positions 618 to 628 (LGKKPWERSNS) are enriched in basic and acidic residues. An EVH2 block C region spans residues 655-689 (DFDRMKQEILEEVVRELHKVKEEIIDAIRQELSRI).

Belongs to the Ena/VASP family. During embryonic and tadpole development, expressed in the cement gland, brain, neural tube, myotome and neural placodes, including the otic, lateral line and olfactory placodes. All isoforms show similar spatial expression patterns.

The protein resides in the cytoplasm. It is found in the cytoskeleton. The protein localises to the stress fiber. It localises to the cell projection. Its subcellular location is the lamellipodium. Ena/VASP proteins are actin-associated proteins involved in a range of processes dependent on cytoskeleton remodeling and cell polarity such as axon guidance and lamellipodial and filopodial dynamics in migrating cells. Evl enhances actin nucleation and polymerization. This is Ena/VASP-like protein from Xenopus laevis (African clawed frog).